Here is a 393-residue protein sequence, read N- to C-terminus: Formate-dependent phosphoribosylglycinamide formyltransferase (393 aa).

N(1)-(5-phospho-beta-D-ribosyl)glycinamide contacts are provided by residues 22-23 and E82; that span reads EL. Residues R114, K155, 160 to 165, 195 to 198, and E203 contribute to the ATP site; these read SSGKGQ and EGFV. Positions 119–308 constitute an ATP-grasp domain; sequence RLAAEELGLP…EFALHVRAIL (190 aa). Residues E267 and E279 each coordinate Mg(2+). Residues D286, K356, and 363–364 each bind N(1)-(5-phospho-beta-D-ribosyl)glycinamide; that span reads RR.

Belongs to the PurK/PurT family. As to quaternary structure, homodimer.

It catalyses the reaction N(1)-(5-phospho-beta-D-ribosyl)glycinamide + formate + ATP = N(2)-formyl-N(1)-(5-phospho-beta-D-ribosyl)glycinamide + ADP + phosphate + H(+). Its pathway is purine metabolism; IMP biosynthesis via de novo pathway; N(2)-formyl-N(1)-(5-phospho-D-ribosyl)glycinamide from N(1)-(5-phospho-D-ribosyl)glycinamide (formate route): step 1/1. Functionally, involved in the de novo purine biosynthesis. Catalyzes the transfer of formate to 5-phospho-ribosyl-glycinamide (GAR), producing 5-phospho-ribosyl-N-formylglycinamide (FGAR). Formate is provided by PurU via hydrolysis of 10-formyl-tetrahydrofolate. The sequence is that of Formate-dependent phosphoribosylglycinamide formyltransferase from Nitratidesulfovibrio vulgaris (strain ATCC 29579 / DSM 644 / CCUG 34227 / NCIMB 8303 / VKM B-1760 / Hildenborough) (Desulfovibrio vulgaris).